Here is a 535-residue protein sequence, read N- to C-terminus: WD repeat-containing protein 25 (535 aa).

2 disordered regions span residues 1–108 and 141–160; these read MASL…PRPS and DQST…RKRG. A compositionally biased stretch (polar residues) spans 141–155; the sequence is DQSTFESTAGNASSS. WD repeat units lie at residues 235–277, 281–320, 321–362, 365–411, 415–454, 460–501, and 504–535; these read GHRG…HCLQ, VHSE…QVFS, GQSD…VVKG, ATIQ…KISN, HERY…RMSR, GHKV…RACT, and GHTQ…KIWH.

In Mus musculus (Mouse), this protein is WD repeat-containing protein 25 (Wdr25).